Here is a 339-residue protein sequence, read N- to C-terminus: Dihydroorotase (339 aa).

2 residues coordinate Zn(2+): His-12 and His-14. Substrate contacts are provided by residues His-14–Arg-16 and Asn-40. The Zn(2+) site is built by Lys-94, His-133, His-167, and Asp-239. An N6-carboxylysine modification is found at Lys-94. Residue His-133 coordinates substrate. Asp-239 is a catalytic residue. Positions 243 and 255 each coordinate substrate.

The protein belongs to the metallo-dependent hydrolases superfamily. DHOase family. Class II DHOase subfamily. Homodimer. The cofactor is Zn(2+).

It carries out the reaction (S)-dihydroorotate + H2O = N-carbamoyl-L-aspartate + H(+). It functions in the pathway pyrimidine metabolism; UMP biosynthesis via de novo pathway; (S)-dihydroorotate from bicarbonate: step 3/3. Catalyzes the reversible cyclization of carbamoyl aspartate to dihydroorotate. In Helicobacter pylori (strain HPAG1), this protein is Dihydroorotase.